A 298-amino-acid chain; its full sequence is Tyrosine recombinase XerD (298 aa).

A Core-binding (CB) domain is found at 2-87 (KQELARIEQF…AVRRLFQYLY (86 aa)). Residues 108-292 (RLPKDLSEAQ…ATERLRQLHQ (185 aa)) enclose the Tyr recombinase domain. Residues Arg-148, Lys-172, His-244, Arg-247, and His-270 contribute to the active site. Residue Tyr-279 is the O-(3'-phospho-DNA)-tyrosine intermediate of the active site.

This sequence belongs to the 'phage' integrase family. XerD subfamily. As to quaternary structure, forms a cyclic heterotetrameric complex composed of two molecules of XerC and two molecules of XerD, in which XerC interacts with XerD via its C-terminal region, XerD interacts with XerC via its C-terminal region and so on.

It localises to the cytoplasm. FtsK may regulate the catalytic switch between XerC and XerD in the heterotetrameric complex during the two steps of the recombination process. In terms of biological role, site-specific tyrosine recombinase, which acts by catalyzing the cutting and rejoining of the recombining DNA molecules. Binds cooperatively to specific DNA consensus sequences that are separated from XerC binding sites by a short central region, forming the heterotetrameric XerC-XerD complex that recombines DNA substrates. The complex is essential to convert dimers of the bacterial chromosome into monomers to permit their segregation at cell division. It also contributes to the segregational stability of plasmids. In the complex XerD specifically exchanges the bottom DNA strands. This is Tyrosine recombinase XerD from Shigella flexneri.